A 65-amino-acid chain; its full sequence is Large ribosomal subunit protein bL35 (65 aa).

3 stretches are compositionally biased toward basic residues: residues 1–18 (MPKMKTKSAAAKRFKRTA), 31–44 (HRFHGKTKKQRRQL), and 55–65 (VKRYKKMIPAK). The interval 1-65 (MPKMKTKSAA…KRYKKMIPAK (65 aa)) is disordered.

Belongs to the bacterial ribosomal protein bL35 family.

The polypeptide is Large ribosomal subunit protein bL35 (Limosilactobacillus fermentum (strain NBRC 3956 / LMG 18251) (Lactobacillus fermentum)).